A 347-amino-acid chain; its full sequence is Succinylglutamate desuccinylase (347 aa).

Residues His-64, Glu-67, and His-159 each contribute to the Zn(2+) site. Glu-222 is a catalytic residue.

It belongs to the AspA/AstE family. Succinylglutamate desuccinylase subfamily. The cofactor is Zn(2+).

The catalysed reaction is N-succinyl-L-glutamate + H2O = L-glutamate + succinate. It participates in amino-acid degradation; L-arginine degradation via AST pathway; L-glutamate and succinate from L-arginine: step 5/5. Its function is as follows. Transforms N(2)-succinylglutamate into succinate and glutamate. The sequence is that of Succinylglutamate desuccinylase from Burkholderia cenocepacia (strain ATCC BAA-245 / DSM 16553 / LMG 16656 / NCTC 13227 / J2315 / CF5610) (Burkholderia cepacia (strain J2315)).